The primary structure comprises 479 residues: Ribosomal RNA small subunit methyltransferase F (479 aa).

Residues 125-131 (AAAPGSK), E149, D176, and D194 each bind S-adenosyl-L-methionine. Residue C247 is the Nucleophile of the active site.

It belongs to the class I-like SAM-binding methyltransferase superfamily. RsmB/NOP family.

It localises to the cytoplasm. It catalyses the reaction cytidine(1407) in 16S rRNA + S-adenosyl-L-methionine = 5-methylcytidine(1407) in 16S rRNA + S-adenosyl-L-homocysteine + H(+). Specifically methylates the cytosine at position 1407 (m5C1407) of 16S rRNA. This Escherichia coli O7:K1 (strain IAI39 / ExPEC) protein is Ribosomal RNA small subunit methyltransferase F.